Consider the following 91-residue polypeptide: Small ribosomal subunit protein bS20 (91 aa).

This sequence belongs to the bacterial ribosomal protein bS20 family.

Binds directly to 16S ribosomal RNA. This Thermosipho melanesiensis (strain DSM 12029 / CIP 104789 / BI429) protein is Small ribosomal subunit protein bS20.